The following is a 130-amino-acid chain: MPMAPRVLLFCLLGLAVTEGHGLEAAVPIPGCHLHPFNVTVRSDRHGTCQGSHVAQACVGHCESSAFPSRYSVLVASGYRHNITSVSQCCTISSLKKVRVWLHCVGNQRGELEIFTARACQCDMCRLSRY.

The signal sequence occupies residues 1–22; the sequence is MPMAPRVLLFCLLGLAVTEGHG. Disulfide bonds link cysteine 32/cysteine 90, cysteine 49/cysteine 104, cysteine 58/cysteine 120, and cysteine 62/cysteine 122. N-linked (GlcNAc...) asparagine glycans are attached at residues asparagine 38 and asparagine 82.

It belongs to the glycoprotein hormones subunit alpha family. As to quaternary structure, heterodimer with GPHB5; this heterodimer interacts with thyroid-stimulating hormone receptor (TSHR), and hence stimulates cAMP production.

The protein resides in the secreted. Functionally, functions as a heterodimeric glycoprotein hormone with GPHB5 able to bind and activate the thyroid-stimulating hormone receptor (TSHR), leading to increased cAMP production. Plays a central role in controlling thyroid cell metabolism. The chain is Glycoprotein hormone alpha-2 (Gpha2) from Rattus norvegicus (Rat).